The chain runs to 121 residues: Large ribosomal subunit protein bL12 (121 aa).

The protein belongs to the bacterial ribosomal protein bL12 family. In terms of assembly, homodimer. Part of the ribosomal stalk of the 50S ribosomal subunit. Forms a multimeric L10(L12)X complex, where L10 forms an elongated spine to which 2 to 4 L12 dimers bind in a sequential fashion. Binds GTP-bound translation factors.

Forms part of the ribosomal stalk which helps the ribosome interact with GTP-bound translation factors. Is thus essential for accurate translation. The polypeptide is Large ribosomal subunit protein bL12 (Oenococcus oeni (strain ATCC BAA-331 / PSU-1)).